Consider the following 106-residue polypeptide: Insulin-2 (106 aa).

Positions 1 to 23 (MALWMQCLPLVLVLLFSTPNTEA) are cleaved as a signal peptide. 3 disulfides stabilise this stretch: Cys-30-Cys-92, Cys-42-Cys-105, and Cys-91-Cys-96. The propeptide at 56–83 (DIEQAQVNGPQDNELDGMQFQPQEYQKM) is c peptide.

It belongs to the insulin family. As to quaternary structure, heterodimer of a B chain and an A chain linked by two disulfide bonds.

It localises to the secreted. Insulin decreases blood glucose concentration. It increases cell permeability to monosaccharides, amino acids and fatty acids. It accelerates glycolysis, the pentose phosphate cycle, and glycogen synthesis in liver. In Xenopus laevis (African clawed frog), this protein is Insulin-2 (ins-b).